Consider the following 532-residue polypeptide: Tegument protein UL21 (532 aa).

Residues 251-276 (SPSVSSAPPPSAPDASLPPPGLQEAA) form a disordered region. A compositionally biased stretch (pro residues) spans 257–276 (APPPSAPDASLPPPGLQEAA).

The protein belongs to the alphaherpesvirinae UL21 protein family. In terms of assembly, interacts (via C-terminus) with UL16.

The protein resides in the virion tegument. It localises to the host cytoplasm. It is found in the host nucleus. Functionally, may participate in DNA packaging/capsid maturation events. Promotes efficient incorporation of tegument proteins UL46, UL49, and US3 into virions. May also play a role in capsid transport to the trans-Golgi network (TGN). This Human herpesvirus 2 (strain HG52) (HHV-2) protein is Tegument protein UL21.